A 94-amino-acid polypeptide reads, in one-letter code: Pyrimidine/purine nucleoside phosphorylase (94 aa).

It belongs to the nucleoside phosphorylase PpnP family.

It catalyses the reaction a purine D-ribonucleoside + phosphate = a purine nucleobase + alpha-D-ribose 1-phosphate. It carries out the reaction adenosine + phosphate = alpha-D-ribose 1-phosphate + adenine. The catalysed reaction is cytidine + phosphate = cytosine + alpha-D-ribose 1-phosphate. The enzyme catalyses guanosine + phosphate = alpha-D-ribose 1-phosphate + guanine. It catalyses the reaction inosine + phosphate = alpha-D-ribose 1-phosphate + hypoxanthine. It carries out the reaction thymidine + phosphate = 2-deoxy-alpha-D-ribose 1-phosphate + thymine. The catalysed reaction is uridine + phosphate = alpha-D-ribose 1-phosphate + uracil. The enzyme catalyses xanthosine + phosphate = alpha-D-ribose 1-phosphate + xanthine. Its function is as follows. Catalyzes the phosphorolysis of diverse nucleosides, yielding D-ribose 1-phosphate and the respective free bases. Can use uridine, adenosine, guanosine, cytidine, thymidine, inosine and xanthosine as substrates. Also catalyzes the reverse reactions. The sequence is that of Pyrimidine/purine nucleoside phosphorylase from Salmonella agona (strain SL483).